Reading from the N-terminus, the 196-residue chain is Holliday junction branch migration complex subunit RuvA (196 aa).

The tract at residues 1 to 63 is domain I; that stretch reads MINKIYGKIV…DDDVKLFGFL (63 aa). Positions 64 to 142 are domain II; sequence NISEREVFED…KGDESSSYML (79 aa). A region of interest (flexible linker) is located at residue Lys-143. Residues 143-196 form a domain III region; it reads KFKELEQSIVNMGFDRKLVVVAFREIMLSDKFLILKEAEQEQFLFTETLKRLSV.

The protein belongs to the RuvA family. In terms of assembly, homotetramer. Forms an RuvA(8)-RuvB(12)-Holliday junction (HJ) complex. HJ DNA is sandwiched between 2 RuvA tetramers; dsDNA enters through RuvA and exits via RuvB. An RuvB hexamer assembles on each DNA strand where it exits the tetramer. Each RuvB hexamer is contacted by two RuvA subunits (via domain III) on 2 adjacent RuvB subunits; this complex drives branch migration. In the full resolvosome a probable DNA-RuvA(4)-RuvB(12)-RuvC(2) complex forms which resolves the HJ.

Its subcellular location is the cytoplasm. Functionally, the RuvA-RuvB-RuvC complex processes Holliday junction (HJ) DNA during genetic recombination and DNA repair, while the RuvA-RuvB complex plays an important role in the rescue of blocked DNA replication forks via replication fork reversal (RFR). RuvA specifically binds to HJ cruciform DNA, conferring on it an open structure. The RuvB hexamer acts as an ATP-dependent pump, pulling dsDNA into and through the RuvAB complex. HJ branch migration allows RuvC to scan DNA until it finds its consensus sequence, where it cleaves and resolves the cruciform DNA. The protein is Holliday junction branch migration complex subunit RuvA of Borrelia duttonii (strain Ly).